Reading from the N-terminus, the 226-residue chain is MYLSRAVSPRNVPVFSTGSFALDVALGVGGLPKGRLVEIYGPEASGKTALALHMLSMLLIRSLAKAIGVNTENLLLSQPDCGKQALSLVDTLIQSGSVDVIVVDSVAALVPKGELDGEMGDAHMAIQARLMSQALRKFSHSLLLSQTLLIFINQVRERFGGPTEVTSGGNALKFYAPMRLDIKRIGLIKKGEEFFRMTKCLCLNACAHNGKSSLREDSEEQARSAI.

Position 41–48 (41–48) interacts with ATP; sequence GPEASGKT.

Belongs to the RecA family.

It is found in the cytoplasm. Its function is as follows. Involved in recombination ability and DNA strand transfer activity. The protein is Putative DNA repair protein recA homolog 4 of Arabidopsis thaliana (Mouse-ear cress).